Reading from the N-terminus, the 66-residue chain is Large ribosomal subunit protein uL29 (66 aa).

This sequence belongs to the universal ribosomal protein uL29 family.

The polypeptide is Large ribosomal subunit protein uL29 (Thermosipho melanesiensis (strain DSM 12029 / CIP 104789 / BI429)).